The chain runs to 189 residues: Movement protein (189 aa).

The protein belongs to the tombusvirus/aureusvirus movement protein p22 family. Interacts with host protein HFI22. Phosphorylated.

It localises to the host membrane. In terms of biological role, transports viral genome to neighboring plant cells directly through plasmosdesmata, without any budding. The movement protein allows efficient cell to cell propagation, by bypassing the host cell wall barrier. The chain is Movement protein from Capsicum annuum (Capsicum pepper).